The sequence spans 373 residues: Dual-specificity RNA methyltransferase RlmN (373 aa).

Glu104 serves as the catalytic Proton acceptor. The Radical SAM core domain maps to 110-349 (KNQRTTLCIS…VTIRKIRGYD (240 aa)). Cys117 and Cys354 are joined by a disulfide. [4Fe-4S] cluster contacts are provided by Cys124, Cys128, and Cys131. Residues 178–179 (GE), Ser210, 232–234 (SLH), and Asn311 each bind S-adenosyl-L-methionine. Cys354 acts as the S-methylcysteine intermediate in catalysis.

It belongs to the radical SAM superfamily. RlmN family. [4Fe-4S] cluster is required as a cofactor.

The protein localises to the cytoplasm. The catalysed reaction is adenosine(2503) in 23S rRNA + 2 reduced [2Fe-2S]-[ferredoxin] + 2 S-adenosyl-L-methionine = 2-methyladenosine(2503) in 23S rRNA + 5'-deoxyadenosine + L-methionine + 2 oxidized [2Fe-2S]-[ferredoxin] + S-adenosyl-L-homocysteine. It catalyses the reaction adenosine(37) in tRNA + 2 reduced [2Fe-2S]-[ferredoxin] + 2 S-adenosyl-L-methionine = 2-methyladenosine(37) in tRNA + 5'-deoxyadenosine + L-methionine + 2 oxidized [2Fe-2S]-[ferredoxin] + S-adenosyl-L-homocysteine. In terms of biological role, specifically methylates position 2 of adenine 2503 in 23S rRNA and position 2 of adenine 37 in tRNAs. m2A2503 modification seems to play a crucial role in the proofreading step occurring at the peptidyl transferase center and thus would serve to optimize ribosomal fidelity. This chain is Dual-specificity RNA methyltransferase RlmN, found in Buchnera aphidicola subsp. Baizongia pistaciae (strain Bp).